The chain runs to 721 residues: MRIQQSALLLLLLAVTSQGDAESNWNDKIKVFTVATEPTDGYTRYIRSARVYDIEVTTLGLGEEWKGGDMQKPGGGFKLNLLREAIAPYKNEPETIILFTDSYDVIITTTLDEIFEKFKESGAKILFSAEKYCWPDKSLANDYPEVEGKASRFLNSGAFIGYAPQVFALLVDPIEDTADDQLYFTKIFLDETKRAKLGLKLDVQSRLFQNLHGAKNDVKLKVDLESNQGVLQNVDFMTTPSIIHGNGLSKVDLNAYGNYLARTFNGVCLLCQENLLDLEETNLPVISLALMVTQPVPFFDQFLEGIESLNYPKEKLHLLIYSNVAFHDDDIKSFVNKHAKEYATAKFALSTDELDERQGRQLALDKARLHQSDYIFFVDADAHIDDGEVLRELLRLNKQFVAPIFSKHKELWSNFWGALSEGGYYARSHDYVDIVKRELIGMFNVPHVTSIYLVKKTAFDAISFKHKEFDPDMAMCESLRNAGIFMYASNLRIFGHLVNADDFNTTVTRPDFYTLFSNEIDWTEKYIHPNYSLQLNESNKIQQPCPDVYWFQIVSDAFCDDLVAIMEAHNGWSDGSNNDNRLEGGYEAVPTRDIHMKQVGLERLYLKFLQMFVRPLQERAFTGYFHNPPRALMNFMVRYRPDEQPSLRPHHDSSTYTINIAMNRAGIDYQGGGCRFIRYNCSVTDTKKGWMLMHPGRLTHYHEGLLVTNGTRYIMISFIDP.

Residues 1 to 21 form the signal peptide; sequence MRIQQSALLLLLLAVTSQGDA. Asparagine 504, asparagine 530, and asparagine 536 each carry an N-linked (GlcNAc...) asparagine glycan. Positions 627 to 721 constitute a Fe2OG dioxygenase domain; the sequence is NPPRALMNFM…RYIMISFIDP (95 aa). Residues histidine 650 and aspartate 652 each contribute to the Fe cation site. Residue asparagine 680 is glycosylated (N-linked (GlcNAc...) asparagine). Fe cation is bound at residue histidine 702. N-linked (GlcNAc...) asparagine glycosylation occurs at asparagine 709. Arginine 712 contacts 2-oxoglutarate.

L-ascorbate is required as a cofactor. Fe(2+) serves as cofactor.

It localises to the endoplasmic reticulum. It is found in the secreted. Its subcellular location is the extracellular space. The catalysed reaction is L-lysyl-[collagen] + 2-oxoglutarate + O2 = (5R)-5-hydroxy-L-lysyl-[collagen] + succinate + CO2. Functionally, forms hydroxylysine residues in collagen type IV. Required for the secretion of collagen type IV (vkg) from haemocytes, fat body and follicle cells. The protein is Procollagen-lysine,2-oxoglutarate 5-dioxygenase of Drosophila melanogaster (Fruit fly).